The primary structure comprises 66 residues: Large ribosomal subunit protein bL35 (66 aa).

Composition is skewed to basic residues over residues 1-16 and 31-45; these read MPKQ…RFKR and HRFH…RQLR. Residues 1–52 form a disordered region; it reads MPKQKTHRASAKRFKRTGNGGLKRSNAYTSHRFHGKTKKQRRQLRKASMVSA.

The protein belongs to the bacterial ribosomal protein bL35 family.

This is Large ribosomal subunit protein bL35 from Ligilactobacillus salivarius (strain UCC118) (Lactobacillus salivarius).